A 719-amino-acid chain; its full sequence is Pesticidal crystal protein Cry1Id (719 aa).

Belongs to the delta endotoxin family.

In terms of biological role, promotes colloidosmotic lysis by binding to the midgut epithelial cells of many lepidopteran larvae. Active on Plutella xylostella and on Bombyx mori. The protein is Pesticidal crystal protein Cry1Id (cry1Id) of Bacillus thuringiensis.